Here is a 416-residue protein sequence, read N- to C-terminus: Notoamide biosynthesis cluster protein N' (416 aa).

Positions 1 to 16 (MRAALLTLAFTALAAA) are cleaved as a signal peptide. 2 N-linked (GlcNAc...) asparagine glycosylation sites follow: N119 and N262.

Part of the gene cluster that mediates the biosynthesis of notoamide, a fungal indole alkaloid that belongs to a family of natural products containing a characteristic bicyclo[2.2.2]diazaoctane core. The first step of notoamide biosynthesis involves coupling of L-proline and L-tryptophan by the bimodular NRPS notE', to produce cyclo-L-tryptophan-L-proline called brevianamide F. The reverse prenyltransferase notF' then acts as a deoxybrevianamide E synthase and converts brevianamide F to deoxybrevianamide E via reverse prenylation at C-2 of the indole ring leading to the bicyclo[2.2.2]diazaoctane core. Deoxybrevianamide E is further hydroxylated at C-6 of the indole ring, likely catalyzed by the cytochrome P450 monooxygenase notG', to yield 6-hydroxy-deoxybrevianamide E. 6-hydroxy-deoxybrevianamide E is a specific substrate of the prenyltransferase notC' for normal prenylation at C-7 to produce 6-hydroxy-7-prenyl-deoxybrevianamide, also called notoamide S. As the proposed pivotal branching point in notoamide biosynthesis, notoamide S can be diverted to notoamide E through an oxidative pyran ring closure putatively catalyzed by either notH' cytochrome P450 monooxygenase or the notD' FAD-linked oxidoreductase. This step would be followed by an indole 2,3-epoxidation-initiated pinacol-like rearrangement catalyzed by the notB' FAD-dependent monooxygenase leading to the formation of notoamide C and notoamide D. On the other hand notoamide S is converted to notoamide T by notH' (or notD'), a bifunctional oxidase that also functions as the intramolecular Diels-Alderase responsible for generation of (-)-notoamide T. To generate antipodal (+)-notoaminide T, notH (or notD) in Aspergillus strain MF297-2 is expected to catalyze a Diels-Alder reaction leading to the opposite stereochemistry. The remaining oxidoreductase notD' (or notH') likely catalyzes the oxidative pyran ring formation to yield (-)-stephacidin A. The FAD-dependent monooxygenase notI' is highly similar to notB' and is predicted to catalyze a similar conversion from (-)-stephacidin A to (+)-notoamide B via the 2,3-epoxidation of (-)-stephacidin A followed by a pinacol-type rearrangement. Finally, it remains unclear which enzyme could be responsible for the final hydroxylation steps leading to notoamide A and sclerotiamide. The function of notN' in the notoamide biosynthesis has not been determined yet. This is Notoamide biosynthesis cluster protein N' from Aspergillus versicolor.